Consider the following 312-residue polypeptide: 3-methyl-2-oxobutanoate hydroxymethyltransferase (312 aa).

It belongs to the PanB family.

It catalyses the reaction 3-methyl-2-oxobutanoate + (6R)-5,10-methylene-5,6,7,8-tetrahydrofolate + H2O = 2-dehydropantoate + (6S)-5,6,7,8-tetrahydrofolate. Its pathway is cofactor biosynthesis; (R)-pantothenate biosynthesis; (R)-pantoate from 3-methyl-2-oxobutanoate: step 1/2. Its function is as follows. Probable 3-methyl-2-oxobutanoate hydroxymethyltransferase required for pantothenic acid biosynthesis. Acts downstream in the pantothenic acid pathway. This chain is 3-methyl-2-oxobutanoate hydroxymethyltransferase, found in Saccharomyces cerevisiae (strain ATCC 204508 / S288c) (Baker's yeast).